The following is a 163-amino-acid chain: IQ domain-containing protein F2 (163 aa).

2 consecutive IQ domains span residues 42 to 71 and 98 to 127; these read RVIA…STWI and RERA…AIYV.

The protein is IQ domain-containing protein F2 (IQCF2) of Bos taurus (Bovine).